A 210-amino-acid polypeptide reads, in one-letter code: FMN-dependent NADH:quinone oxidoreductase (210 aa).

Residues Ser-9 and 15-17 each bind FMN; that span reads SHS.

Belongs to the azoreductase type 1 family. In terms of assembly, homodimer. FMN is required as a cofactor.

The enzyme catalyses 2 a quinone + NADH + H(+) = 2 a 1,4-benzosemiquinone + NAD(+). It carries out the reaction N,N-dimethyl-1,4-phenylenediamine + anthranilate + 2 NAD(+) = 2-(4-dimethylaminophenyl)diazenylbenzoate + 2 NADH + 2 H(+). Functionally, quinone reductase that provides resistance to thiol-specific stress caused by electrophilic quinones. Also exhibits azoreductase activity. Catalyzes the reductive cleavage of the azo bond in aromatic azo compounds to the corresponding amines. This Mesorhizobium japonicum (strain LMG 29417 / CECT 9101 / MAFF 303099) (Mesorhizobium loti (strain MAFF 303099)) protein is FMN-dependent NADH:quinone oxidoreductase.